The primary structure comprises 152 residues: Mitochondrial holo-[acyl-carrier-protein] synthase (152 aa).

Belongs to the P-Pant transferase superfamily. AcpS family.

The protein resides in the mitochondrion. It carries out the reaction apo-[ACP] + CoA = holo-[ACP] + adenosine 3',5'-bisphosphate + H(+). In terms of biological role, transfers the 4'-phosphopantetheine moiety from coenzyme A to a Ser of mitochondrial acyl-carrier-protein. This Candida glabrata (strain ATCC 2001 / BCRC 20586 / JCM 3761 / NBRC 0622 / NRRL Y-65 / CBS 138) (Yeast) protein is Mitochondrial holo-[acyl-carrier-protein] synthase (PPT2).